The primary structure comprises 399 residues: Formaldehyde dismutase (399 aa).

Cys46 is a binding site for Zn(2+). 47 to 51 (GSDQH) lines the NAD(+) pocket. Residues His67, Cys97, Cys100, Cys103, Cys111, and Asp170 each coordinate Zn(2+). Thr174 contacts NAD(+). His177 is a binding site for Zn(2+). NAD(+) is bound by residues 197–198 (PV), 218–219 (DQ), Arg223, Val263, His268, Pro299, 299–301 (PGI), and 336–338 (GMA).

Belongs to the zinc-containing alcohol dehydrogenase family. As to quaternary structure, homotetramer. Zn(2+) is required as a cofactor. NAD(+) serves as cofactor. The cofactor is NADH.

It catalyses the reaction 2 formaldehyde + H2O = methanol + formate + H(+). With respect to regulation, inhibited by the substrate analog pyrazole but not by NAD analogs such as AMP, ADP, ATP or N-methylnicotinamide chloride. Its function is as follows. Active against a range of primary alcohols as well as some secondary alcohols. Exhibits higher activity against alcohols with longer carbon chains. The chain is Formaldehyde dismutase from Pseudomonas putida (Arthrobacter siderocapsulatus).